The primary structure comprises 155 residues: Small ribosomal subunit protein uS7cz/uS7cy (155 aa).

It belongs to the universal ribosomal protein uS7 family. In terms of assembly, part of the 30S ribosomal subunit.

It localises to the plastid. It is found in the chloroplast. Functionally, one of the primary rRNA binding proteins, it binds directly to 16S rRNA where it nucleates assembly of the head domain of the 30S subunit. The chain is Small ribosomal subunit protein uS7cz/uS7cy (rps7-A) from Oenothera argillicola (Appalachian evening primrose).